The chain runs to 310 residues: Alpha/beta hydrolase domain-containing protein 17C (310 aa).

Catalysis depends on charge relay system residues serine 192, aspartate 257, and histidine 286.

This sequence belongs to the AB hydrolase superfamily. ABHD17 family. Palmitoylated on cysteine residues located in a cysteine cluster at the N-terminus which promotes membrane localization.

Its subcellular location is the recycling endosome membrane. It localises to the cell projection. It is found in the dendritic spine. The protein resides in the postsynaptic density membrane. The catalysed reaction is S-hexadecanoyl-L-cysteinyl-[protein] + H2O = L-cysteinyl-[protein] + hexadecanoate + H(+). In terms of biological role, hydrolyzes fatty acids from S-acylated cysteine residues in proteins. The protein is Alpha/beta hydrolase domain-containing protein 17C of Xenopus tropicalis (Western clawed frog).